Here is a 419-residue protein sequence, read N- to C-terminus: Sphingomyelin phosphodiesterase 2 (419 aa).

Position 49 (glutamate 49) interacts with Mg(2+). Histidine 272 (proton acceptor) is an active-site residue. The next 2 helical transmembrane spans lie at 326–346 (FSGY…VLAA) and 354–374 (AIIL…VYLF).

It belongs to the neutral sphingomyelinase family. Mg(2+) serves as cofactor. As to expression, although widely expressed in all tissues examined, except the spleen, high enzymatic activity occurs only in the brain.

The protein resides in the cell membrane. It carries out the reaction a sphingomyelin + H2O = phosphocholine + an N-acylsphing-4-enine + H(+). It catalyses the reaction an N-(acyl)-sphingosylphosphocholine + H2O = an N-acyl-sphingoid base + phosphocholine + H(+). The catalysed reaction is 1-O-octadecyl-sn-glycero-3-phosphocholine + H2O = 1-O-octadecyl-sn-glycerol + phosphocholine + H(+). The enzyme catalyses 1-hexadecanoyl-sn-glycero-3-phosphocholine + H2O = 1-hexadecanoyl-sn-glycerol + phosphocholine + H(+). It carries out the reaction a sphingosylphosphocholine + H2O = a sphingoid base + phosphocholine + H(+). It catalyses the reaction 1-O-hexadecyl-sn-glycero-3-phosphocholine + H2O = 1-O-hexadecyl-sn-glycerol + phosphocholine + H(+). It functions in the pathway lipid metabolism; sphingolipid metabolism. Its activity is regulated as follows. Activated by arachidonic acid. In terms of biological role, catalyzes, at least in vitro, the hydrolysis of sphingomyelin to form ceramide and phosphocholine. Also hydrolyzes 1-O-alkyl-2-lyso-sn-glycero-3-phosphocholine (lyso-platelet-activating factor) in vivo. Also acts on 1-acyl-2-lyso-sn-glycero-3-phosphocholine (lyso-PC) and sphingosylphosphocholine. This is Sphingomyelin phosphodiesterase 2 from Mus musculus (Mouse).